Here is a 458-residue protein sequence, read N- to C-terminus: MSLGTVVEVIGAVVDVEFPRDSVPKVNDALKLVDSDLVFEVQQQLGDGVVRTIAMGTTDGLKRGLKAENTGHPIQVPVGKKTLGRIMDVLGRPVDDAGPIDAEETWAIHRKAPSYEEQAGSQELLETGIKVIDLLCPFAKGGKVGLFGGAGVGKTVNMMELIRNIAIEHSGYSVFAGVGERTREGNDFYHEMKDSNVLDKVSLVYGQMNEPPGNRLRVALTGLTMAEKFRDEGRDVLLFIDNIYRYTLAGVEVSALLGRMPSAVGYQPTLAEEMGMLQERITSTKTGSITSIQAVYVPADDLTDPSPATTFAHLDATVVLSRQIAELGIYPAVDPLDSTSRQLDPLIVGQEHYDTARRVQQTLQRYKELKDIIAILGMDELSEEDKRVVTRARKIQRFLSQPFFVAEVFTGSPGKYVSLKDTIKGFQGILAGEYDDLPEQAFYMVGSIEEAVAKAKTL.

An ATP-binding site is contributed by 148-155 (GGAGVGKT).

This sequence belongs to the ATPase alpha/beta chains family. F-type ATPases have 2 components, CF(1) - the catalytic core - and CF(0) - the membrane proton channel. CF(1) has five subunits: alpha(3), beta(3), gamma(1), delta(1), epsilon(1). CF(0) has three main subunits: a(1), b(2) and c(9-12). The alpha and beta chains form an alternating ring which encloses part of the gamma chain. CF(1) is attached to CF(0) by a central stalk formed by the gamma and epsilon chains, while a peripheral stalk is formed by the delta and b chains.

The protein localises to the cell inner membrane. The enzyme catalyses ATP + H2O + 4 H(+)(in) = ADP + phosphate + 5 H(+)(out). In terms of biological role, produces ATP from ADP in the presence of a proton gradient across the membrane. The catalytic sites are hosted primarily by the beta subunits. The chain is ATP synthase subunit beta from Legionella pneumophila (strain Paris).